We begin with the raw amino-acid sequence, 137 residues long: Crustacean hyperglycemic hormones (137 aa).

The first 28 residues, 1 to 28, serve as a signal peptide directing secretion; sequence MVSFRTMWSLVVVVVVVAASLGSSGVHG. A Pyrrolidone carboxylic acid modification is found at Gln64. At Phe66 the chain carries D-phenylalanine; in form CHH-II. Disulfide bonds link Cys70/Cys106, Cys86/Cys102, and Cys89/Cys115. Val135 bears the Valine amide mark.

It belongs to the arthropod CHH/MIH/GIH/VIH hormone family. As to expression, produced by the medulla terminalis X-organ in the eyestalks and transported to the sinus gland where they are stored and released.

Its subcellular location is the secreted. Hormone found in the sinus gland of isopods and decapods which controls the blood sugar level. Has a secretagogue action over the amylase released from the midgut gland. May act as a stress hormone and may be involved in the control of molting and reproduction. This Procambarus clarkii (Red swamp crayfish) protein is Crustacean hyperglycemic hormones.